Reading from the N-terminus, the 184-residue chain is Photosystem I assembly protein Ycf4 (184 aa).

Helical transmembrane passes span 19–39 and 57–77; these read ISNFCWAFILFLGSLGFLLVG and IVFFPQGIVMSFYGIAGLFIS.

This sequence belongs to the Ycf4 family.

Its subcellular location is the plastid. It localises to the chloroplast thylakoid membrane. Functionally, seems to be required for the assembly of the photosystem I complex. In Nicotiana tomentosiformis (Tobacco), this protein is Photosystem I assembly protein Ycf4.